Consider the following 377-residue polypeptide: Actin-related protein T2 (377 aa).

The protein belongs to the actin family.

It localises to the cytoplasm. The protein resides in the cytoskeleton. In Macaca fascicularis (Crab-eating macaque), this protein is Actin-related protein T2 (ACTRT2).